Here is a 272-residue protein sequence, read N- to C-terminus: Cerberus (272 aa).

The signal sequence occupies residues 1-19 (MSLLLLQLLVLSCLGDTEP). 4 cysteine pairs are disulfide-bonded: cysteine 168–cysteine 215, cysteine 182–cysteine 229, cysteine 192–cysteine 245, and cysteine 196–cysteine 247. Residues 168–253 (CRTLPFSQSV…ECNCETQKIE (86 aa)) enclose the CTCK domain. A glycan (N-linked (GlcNAc...) asparagine) is linked at asparagine 228.

The protein belongs to the DAN family.

The protein resides in the secreted. Functionally, cytokine that acts as a regulator of the activity of Nodal/BMP pathways during the establishment of bilateral asymmetry in the head and trunk of the embryo. The chain is Cerberus (CER1) from Gallus gallus (Chicken).